The chain runs to 332 residues: Ribosomal RNA small subunit methyltransferase C (332 aa).

Belongs to the methyltransferase superfamily. RsmC family. As to quaternary structure, monomer.

The protein resides in the cytoplasm. It catalyses the reaction guanosine(1207) in 16S rRNA + S-adenosyl-L-methionine = N(2)-methylguanosine(1207) in 16S rRNA + S-adenosyl-L-homocysteine + H(+). Functionally, specifically methylates the guanine in position 1207 of 16S rRNA in the 30S particle. The polypeptide is Ribosomal RNA small subunit methyltransferase C (Pseudomonas aeruginosa (strain LESB58)).